Here is a 309-residue protein sequence, read N- to C-terminus: Zinc transporter ZIP2 (309 aa).

Residues 1–8 are Extracellular-facing; that stretch reads MEVLLGVK. The chain crosses the membrane as a helical span at residues 9 to 29; that stretch reads IGCLLALLVLTLGCGLTPIYV. The Cytoplasmic segment spans residues 30–43; it reads KWFQMDAATGHHHR. The chain crosses the membrane as a helical span at residues 44 to 64; that stretch reads VLSLLGCTSAGVFLGAGLMHM. Over 65–103 the chain is Extracellular; the sequence is TAEALEGIESEIQKFVEQNSTGSKGNSSRDAASSYVEYP. Residues 104 to 124 form a helical membrane-spanning segment; that stretch reads YGELVISLGFFFVFLLESLAL. Residues 125–164 lie on the Cytoplasmic side of the membrane; sequence QCCHGAAGGSTVQEEEWGGTHAFGFHKHPAVPSPSRGPLR. Residues 165–185 form a helical membrane-spanning segment; that stretch reads ALVLLLSLSFHSVFEGLAVGL. Residues histidine 175 and glutamate 179 each contribute to the Zn(2+) site. The Extracellular segment spans residues 186–191; it reads QATVAA. The helical transmembrane segment at 192–212 threads the bilayer; sequence TIQLCVAVLAHKGLVVFSVGL. Histidine 202 is a binding site for Zn(2+). The Cytoplasmic segment spans residues 213–225; that stretch reads RLGKIGTGPRWAT. The helical transmembrane segment at 226–246 threads the bilayer; sequence FCILSLALMSPVGLALGLTVA. The Extracellular segment spans residues 247–258; the sequence is GGASGQTQGLAQ. A helical transmembrane segment spans residues 259–279; it reads AVLEGIAAGTFLYVTFLEILP. Glutamate 276 is a binding site for Zn(2+). Topologically, residues 280–288 are cytoplasmic; it reads RELACPEAP. The helical transmembrane segment at 289–309 threads the bilayer; it reads LAKYSCVAAGFAFMALIALWA.

The protein belongs to the ZIP transporter (TC 2.A.5) family. As to expression, high expression in the liver, skin and ovary.

Its subcellular location is the cell membrane. The catalysed reaction is Zn(2+)(in) = Zn(2+)(out). The enzyme catalyses Cd(2+)(in) = Cd(2+)(out). Its function is as follows. Transporter for the divalent cation Zn(2+). Mediates the influx of Zn(2+) into cells from extracellular space. The Zn(2+) uniporter activity is independent of H(+)-driving force, but is modulated by extracellular pH and membrane potential. Transports also other divalent cations Zn(2+), Cd2(+), Cu2(+), Co2(+) in the order of decreasing affinity, respectively. In the skin, aids in the differentiation of keratinocytes in the epidermis. This Mus musculus (Mouse) protein is Zinc transporter ZIP2 (Slc39a2).